Here is a 194-residue protein sequence, read N- to C-terminus: Putative 3-methyladenine DNA glycosylase (194 aa).

This sequence belongs to the DNA glycosylase MPG family.

The sequence is that of Putative 3-methyladenine DNA glycosylase from Chlamydia felis (strain Fe/C-56) (Chlamydophila felis).